Reading from the N-terminus, the 161-residue chain is MARSFSLAKNPLFWQVAIAGIILDQLSKLWVSQAMDPVGTTWPLWSGVFHFTYVLNTGAAFSAFRGGAGWLKWLSLAVSVGLIIFAGKVPLRKLEQLGYGCILAGAVGNGIDRFLFGHVIDFLDFRLINFPIFNLADVSINIGIAALLWASFFPVSSRKVD.

The next 4 membrane-spanning stretches (helical) occupy residues 11–31 (PLFW…KLWV), 44–64 (LWSG…FSAF), 66–86 (GGAG…IIFA), and 100–120 (GCIL…GHVI). Active-site residues include aspartate 121 and aspartate 137. A helical transmembrane segment spans residues 135–155 (LADVSINIGIAALLWASFFPV).

This sequence belongs to the peptidase A8 family.

It is found in the cell inner membrane. The enzyme catalyses Release of signal peptides from bacterial membrane prolipoproteins. Hydrolyzes -Xaa-Yaa-Zaa-|-(S,diacylglyceryl)Cys-, in which Xaa is hydrophobic (preferably Leu), and Yaa (Ala or Ser) and Zaa (Gly or Ala) have small, neutral side chains.. Its pathway is protein modification; lipoprotein biosynthesis (signal peptide cleavage). In terms of biological role, this protein specifically catalyzes the removal of signal peptides from prolipoproteins. The protein is Lipoprotein signal peptidase of Synechocystis sp. (strain ATCC 27184 / PCC 6803 / Kazusa).